Reading from the N-terminus, the 546-residue chain is NRAMP-like transporter smf-2 (546 aa).

Residues 1–42 lie on the Cytoplasmic side of the membrane; that stretch reads MPGFQNANISDLAPPAREKTFDDTIAVKIPEDEKNTWFSWRK. A helical transmembrane segment spans residues 43 to 63; it reads LWAFTGPGFLMSIAYLDPGNI. The Extracellular portion of the chain corresponds to 64 to 70; it reads ESDLQAG. Residues 71–91 traverse the membrane as a helical segment; it reads AQAEYKLLWVLLVSHIVGMLL. The Cytoplasmic portion of the chain corresponds to 92 to 119; it reads QRMSARLGVVSGKHMAEIAYDYYPLVPR. The chain crosses the membrane as a helical span at residues 120-140; it reads IILWLMIEIAIVCSDMQEVIG. The Extracellular segment spans residues 141-152; sequence TAIAIYLLSSGK. Residues 153 to 173 form a helical membrane-spanning segment; it reads IPLLVGVLITILDTFTFLFID. Topologically, residues 174–181 are cytoplasmic; sequence RYGIRKLE. The helical transmembrane segment at 182–202 threads the bilayer; it reads FIFVALISTMAISFGYEFVVM. The Extracellular segment spans residues 203-228; it reads KPVLTKVLTGTVVPWCSGCGKEEIIT. The helical transmembrane segment at 229–249 threads the bilayer; that stretch reads AISIFGAVIMPHNFYLHSALV. Topologically, residues 250–270 are cytoplasmic; it reads KSRKVDRSSKTRIAEANKYFS. Residues 271 to 291 form a helical membrane-spanning segment; it reads IESAFALSVSFFINLFVLSVF. Over 292 to 334 the chain is Extracellular; sequence ARGLYQKTNGDVNSMCLSHNDIPDSNVFPNNTSSVTVDLFQGG. The N-linked (GlcNAc...) asparagine glycan is linked to Asn-321. A helical membrane pass occupies residues 335 to 355; that stretch reads IYLGCQFGLFAMIIWAIGIFA. Residues 356-386 are Cytoplasmic-facing; it reads AGQSSTMTGTYTGQFVMEGFVRISWPKWKRV. A helical transmembrane segment spans residues 387–407; that stretch reads LITRAVAITPTLILCIKAHGI. Over 408–415 the chain is Extracellular; that stretch reads KNLTGMND. N-linked (GlcNAc...) asparagine glycosylation is present at Asn-409. Residues 416–436 traverse the membrane as a helical segment; it reads FLNCVQMVQLPFALIPMITFT. Residues 437–453 lie on the Cytoplasmic side of the membrane; it reads SSKRIMHNFRTSKPLQY. Residues 454–474 traverse the membrane as a helical segment; sequence FSIICGIITIGINVYFIFQYV. Over 475–483 the chain is Extracellular; sequence TENFGTGWL. Residues 484-504 form a helical membrane-spanning segment; the sequence is IFVIIGPFTLLYIAFILYLAI. Residues 505-546 lie on the Cytoplasmic side of the membrane; the sequence is YCLVACELMNDTVNLPGFDFHRTLELDAPWITETFVVNDVYF.

It belongs to the NRAMP family. In terms of tissue distribution, expressed in dopaminergic neurons (at protein level). Primarily expressed in mc1, mc2 and mc3 epithelial cells of the pharynx and vpil-6 pharyngeal-intestinal valve cells displaying an anterior-posterior expression gradient. Expressed in gonad sheath cells.

It is found in the apical cell membrane. Its subcellular location is the cytoplasmic vesicle membrane. Its function is as follows. Probable divalent metal ion transporter which regulates Mn(2+) uptake. In Caenorhabditis elegans, this protein is NRAMP-like transporter smf-2.